The primary structure comprises 239 residues: tRNA pseudouridine synthase C (239 aa).

The active site involves D54.

The protein belongs to the pseudouridine synthase RluA family.

The enzyme catalyses uridine(65) in tRNA = pseudouridine(65) in tRNA. Its function is as follows. Responsible for synthesis of pseudouridine from uracil-65 in transfer RNAs. The polypeptide is tRNA pseudouridine synthase C (truC) (Haemophilus influenzae (strain ATCC 51907 / DSM 11121 / KW20 / Rd)).